Consider the following 510-residue polypeptide: Proline--tRNA ligase 2 (510 aa).

Belongs to the class-II aminoacyl-tRNA synthetase family. ProS type 3 subfamily. As to quaternary structure, homodimer.

Its subcellular location is the cytoplasm. It catalyses the reaction tRNA(Pro) + L-proline + ATP = L-prolyl-tRNA(Pro) + AMP + diphosphate. Its function is as follows. Catalyzes the attachment of proline to tRNA(Pro) in a two-step reaction: proline is first activated by ATP to form Pro-AMP and then transferred to the acceptor end of tRNA(Pro). The polypeptide is Proline--tRNA ligase 2 (Anaeromyxobacter dehalogenans (strain 2CP-C)).